A 140-amino-acid polypeptide reads, in one-letter code: Resuscitation-promoting factor RpfC (140 aa).

The signal sequence occupies residues 1–31 (MTRIAKPLIKSAMAAGLVTASMSLSTAVAHA).

This sequence belongs to the transglycosylase family. Rpf subfamily.

The protein localises to the secreted. In terms of biological role, factor that stimulates resuscitation of dormant cells. Has peptidoglycan (PG) hydrolytic activity. The chain is Resuscitation-promoting factor RpfC (rpfC) from Mycobacterium tuberculosis (strain ATCC 35801 / TMC 107 / Erdman).